Consider the following 398-residue polypeptide: GATA transcription factor 21 (398 aa).

The interval 20 to 51 is disordered; it reads QPFFYPLGSSSSLHHHHHHHHHQVPSNSSSSS. Residues 32–42 are compositionally biased toward basic residues; sequence LHHHHHHHHHQ. Residues 109–116 carry the Nuclear localization signal motif; it reads PKKETRLK. Residues 122–144 are disordered; it reads KDHEDQPHPLHQNPTKPDSDSDK. The GATA-type zinc-finger motif lies at 226–280; that stretch reads NGVIRVCSDCNTTKTPLWRSGPRGPKSLCNACGIRQRKARRAAMAAAAAAGDQEV. The segment at 289 to 353 is disordered; sequence LPLKKKLQNK…KSTTSSNSSI (65 aa). The span at 291–302 shows a compositional bias: basic residues; it reads LKKKLQNKKKRS. Over residues 343-353 the composition is skewed to low complexity; that stretch reads SKSTTSSNSSI.

This sequence belongs to the type IV zinc-finger family. Class B subfamily. Interacts with SNL1. Forms heterodimers with GATA18. In terms of tissue distribution, expressed predominantly in leaves, and barely in stems, flowers and siliques.

It is found in the nucleus. Functionally, transcriptional regulator that specifically binds 5'-GATA-3' or 5'-GAT-3' motifs within gene promoters. Involved in the modulation of chloroplast development, growth and division in a cytokinin-dependent manner. Repressor of the gibberellic acid (GA) signaling pathway that represses flowering and modulates greening, in a SOC1-dependent manner. Prevents the accumulation of SOC1 during flowering. Promotes chlorophyll biosynthesis throughout the plant, by regulating chlorophyll biosynthetic genes (e.g. HEMA1 and GUN4) and chloroplast localized glutamate synthase (e.g. GLU1). Involved in the regulation of sugar-sensing genes (e.g. HXK1, HXK2, STP13 and PLT6). Regulator of germination, senescence, elongation growth and flowering time. Also influences leaf starch content. This Arabidopsis thaliana (Mouse-ear cress) protein is GATA transcription factor 21.